A 529-amino-acid polypeptide reads, in one-letter code: Bifunctional purine biosynthesis protein PurH (529 aa).

Residues 1–148 (MQQRRPVRRA…KNHKDVAIVV (148 aa)) form the MGS-like domain. Lys-287 carries the N6-acetyllysine modification.

This sequence belongs to the PurH family.

It carries out the reaction (6R)-10-formyltetrahydrofolate + 5-amino-1-(5-phospho-beta-D-ribosyl)imidazole-4-carboxamide = 5-formamido-1-(5-phospho-D-ribosyl)imidazole-4-carboxamide + (6S)-5,6,7,8-tetrahydrofolate. The catalysed reaction is IMP + H2O = 5-formamido-1-(5-phospho-D-ribosyl)imidazole-4-carboxamide. The protein operates within purine metabolism; IMP biosynthesis via de novo pathway; 5-formamido-1-(5-phospho-D-ribosyl)imidazole-4-carboxamide from 5-amino-1-(5-phospho-D-ribosyl)imidazole-4-carboxamide (10-formyl THF route): step 1/1. It functions in the pathway purine metabolism; IMP biosynthesis via de novo pathway; IMP from 5-formamido-1-(5-phospho-D-ribosyl)imidazole-4-carboxamide: step 1/1. The polypeptide is Bifunctional purine biosynthesis protein PurH (Escherichia coli O157:H7).